Here is a 477-residue protein sequence, read N- to C-terminus: Ribulose bisphosphate carboxylase large chain (477 aa).

Residues 1–2 constitute a propeptide that is removed on maturation; that stretch reads MS. An N-acetylproline modification is found at proline 3. At lysine 14 the chain carries N6,N6,N6-trimethyllysine. Substrate-binding residues include asparagine 123 and threonine 173. Residue lysine 175 is the Proton acceptor of the active site. Lysine 177 contributes to the substrate binding site. Residues lysine 201, aspartate 203, and glutamate 204 each contribute to the Mg(2+) site. At lysine 201 the chain carries N6-carboxylysine. Catalysis depends on histidine 294, which acts as the Proton acceptor. Positions 295, 327, and 379 each coordinate substrate.

The protein belongs to the RuBisCO large chain family. Type I subfamily. In terms of assembly, heterohexadecamer of 8 large chains and 8 small chains; disulfide-linked. The disulfide link is formed within the large subunit homodimers. The cofactor is Mg(2+). Post-translationally, the disulfide bond which can form in the large chain dimeric partners within the hexadecamer appears to be associated with oxidative stress and protein turnover.

The protein resides in the plastid. The protein localises to the chloroplast. It catalyses the reaction 2 (2R)-3-phosphoglycerate + 2 H(+) = D-ribulose 1,5-bisphosphate + CO2 + H2O. The enzyme catalyses D-ribulose 1,5-bisphosphate + O2 = 2-phosphoglycolate + (2R)-3-phosphoglycerate + 2 H(+). Its function is as follows. RuBisCO catalyzes two reactions: the carboxylation of D-ribulose 1,5-bisphosphate, the primary event in carbon dioxide fixation, as well as the oxidative fragmentation of the pentose substrate in the photorespiration process. Both reactions occur simultaneously and in competition at the same active site. This Hyophorbe lagenicaulis (Bottle palm) protein is Ribulose bisphosphate carboxylase large chain.